A 135-amino-acid polypeptide reads, in one-letter code: uncharacterized protein (135 aa).

This is an uncharacterized protein from Saccharomyces cerevisiae (strain ATCC 204508 / S288c) (Baker's yeast).